The following is a 107-amino-acid chain: Nucleoid-associated protein Hhal_0231 (107 aa).

2 disordered regions span residues 1–24 (MKGG…KAQE) and 82–107 (VQRE…KLPF). Residues 15–24 (MQEDMQKAQE) show a composition bias toward basic and acidic residues.

It belongs to the YbaB/EbfC family. As to quaternary structure, homodimer.

It is found in the cytoplasm. The protein localises to the nucleoid. Its function is as follows. Binds to DNA and alters its conformation. May be involved in regulation of gene expression, nucleoid organization and DNA protection. In Halorhodospira halophila (strain DSM 244 / SL1) (Ectothiorhodospira halophila (strain DSM 244 / SL1)), this protein is Nucleoid-associated protein Hhal_0231.